Reading from the N-terminus, the 168-residue chain is S-ribosylhomocysteine lyase (168 aa).

Fe cation contacts are provided by H54, H58, and C128.

This sequence belongs to the LuxS family. Homodimer. It depends on Fe cation as a cofactor.

The catalysed reaction is S-(5-deoxy-D-ribos-5-yl)-L-homocysteine = (S)-4,5-dihydroxypentane-2,3-dione + L-homocysteine. Involved in the synthesis of autoinducer 2 (AI-2) which is secreted by bacteria and is used to communicate both the cell density and the metabolic potential of the environment. The regulation of gene expression in response to changes in cell density is called quorum sensing. Catalyzes the transformation of S-ribosylhomocysteine (RHC) to homocysteine (HC) and 4,5-dihydroxy-2,3-pentadione (DPD). This is S-ribosylhomocysteine lyase from Neisseria meningitidis serogroup A / serotype 4A (strain DSM 15465 / Z2491).